The chain runs to 743 residues: Myb-related protein B (743 aa).

The interval 1–29 (MSRRSRGDDLEDLQYQDTDSDVPEPKENR) is disordered. Acidic residues predominate over residues 9 to 22 (DLEDLQYQDTDSDV). 3 HTH myb-type domains span residues 26–77 (KENR…LRVL), 78–133 (HPDL…NPEV), and 134–184 (KKSS…KRKV). DNA-binding regions (H-T-H motif) lie at residues 54–77 (WKTIASNLNNRTEQQCQHRWLRVL), 106–129 (WTLIAKQLRGRMGKQCRERWHNHL), and 157–180 (WAEIAKLLPGRTDNAVKNHWNSTI). 2 disordered regions span residues 221-262 (VERS…SESA) and 381-406 (VTENGGSITTSVTEANSMTPKSTPVK).

Component of the DREAM complex.

The protein localises to the nucleus. This Xenopus laevis (African clawed frog) protein is Myb-related protein B (mybl2).